The sequence spans 372 residues: Aminomethyltransferase (372 aa).

The protein belongs to the GcvT family. As to quaternary structure, the glycine cleavage system is composed of four proteins: P, T, L and H.

It catalyses the reaction N(6)-[(R)-S(8)-aminomethyldihydrolipoyl]-L-lysyl-[protein] + (6S)-5,6,7,8-tetrahydrofolate = N(6)-[(R)-dihydrolipoyl]-L-lysyl-[protein] + (6R)-5,10-methylene-5,6,7,8-tetrahydrofolate + NH4(+). The glycine cleavage system catalyzes the degradation of glycine. The polypeptide is Aminomethyltransferase (Burkholderia mallei (strain NCTC 10247)).